Here is a 586-residue protein sequence, read N- to C-terminus: BTB/POZ domain and ankyrin repeat-containing protein NPR1 (586 aa).

Positions 63-139 constitute a BTB domain; it reads SDADIVVEGI…VYTGKLKPSP (77 aa). Residues 142–156 form a C2HC NPR-type zinc finger; that stretch reads VSTCVHNVCAHDACR. The Zn(2+) site is built by Cys145, Cys150, His152, and Cys155. 3 ANK repeats span residues 266–296, 298–325, and 329–358; these read KRIRRIHKALDSDDVELVKLLLTESNITLDE, NALHYAAAYCDPKVVTEVLALGLADVNL, and RGYTALHIAVMRKEPSIIVLLLTKGARASE. The segment at 388 to 522 is salicylic acid-binding core (SBC); it reads EANKDRICID…LDKFIDDDLP (135 aa). Residue Arg433 coordinates salicylate. The tract at residues 561–586 is disordered; sequence NLSGLSSSSSTTSPEKIGANQKVREP. Residues 562–573 are compositionally biased toward low complexity; that stretch reads LSGLSSSSSTTS.

It belongs to the plant 'ANKYRIN-BTB/POZ' family. 'NPR1-like' subfamily. In terms of tissue distribution, highly expressed in leaves. Expressed at low levels in roots and stems.

The protein resides in the cytoplasm. The protein localises to the nucleus. Its subcellular location is the nuclear body. The protein operates within protein modification; protein ubiquitination. Salicylic acid (SA)-binding substrate-specific adapter of an E3 ubiquitin-protein ligase complex (CUL3-RBX1-BTB) which mediates the ubiquitination and subsequent proteasomal degradation of target proteins. Transcription cofactor that represses gene expression in the absence of salicylic acid (SA), when attached to negative cis-elements (W-box) with WRKY transcription factors, but stimulates gene expression upon activation by SA, when sumoylated and attached to positive cis-elements (as-1) with TGA transcription factors, thus confering immunity through a series of gene regulations ending in a significant increase in antimicrobial and defense genes expression. Probable component of the salicylic acid (SA) defense signaling pathway and pathogen-induced systemic acquired resistance (SAR). May be involved in disease resistance against fungal pathogens. May be involved in tolerance to salt and osmotic stresses. The protein is BTB/POZ domain and ankyrin repeat-containing protein NPR1 of Malus hupehensis (Chinese crab apple).